Reading from the N-terminus, the 370-residue chain is tRNA-specific 2-thiouridylase MnmA (370 aa).

Residues 7-14 (GISGGVDS) and Met33 contribute to the ATP site. The tract at residues 104–106 (NPD) is interaction with target base in tRNA. Residue Cys109 is the Nucleophile of the active site. Cys109 and Cys208 are oxidised to a cystine. Gly134 is a binding site for ATP. Residues 158 to 160 (KDQ) are interaction with tRNA. The Cysteine persulfide intermediate role is filled by Cys208.

This sequence belongs to the MnmA/TRMU family.

The protein resides in the cytoplasm. The enzyme catalyses S-sulfanyl-L-cysteinyl-[protein] + uridine(34) in tRNA + AH2 + ATP = 2-thiouridine(34) in tRNA + L-cysteinyl-[protein] + A + AMP + diphosphate + H(+). Catalyzes the 2-thiolation of uridine at the wobble position (U34) of tRNA, leading to the formation of s(2)U34. The sequence is that of tRNA-specific 2-thiouridylase MnmA from Malacoplasma penetrans (strain HF-2) (Mycoplasma penetrans).